A 66-amino-acid chain; its full sequence is Hirudin-PA (66 aa).

The segment at 1–3 (ITY) is interaction with thrombin active site. Intrachain disulfides connect C6–C14, C16–C28, and C22–C39. The disordered stretch occupies residues 39-66 (CVTGEGTPKPQSHNQGDFEPIPEDAYDE). Residue T45 is glycosylated (O-linked (GalNAc...) threonine). An interaction with fibrinogen-binding exosite of thrombin region spans residues 55 to 66 (DFEPIPEDAYDE). Y64 is subject to Sulfotyrosine.

This sequence belongs to the protease inhibitor I14 (hirudin) family.

The protein resides in the secreted. In terms of biological role, hirudin is a potent thrombin-specific protease inhibitor. It forms a stable non-covalent complex with alpha-thrombin, thereby abolishing its ability to cleave fibrinogen. The polypeptide is Hirudin-PA (Hirudo medicinalis (Medicinal leech)).